Reading from the N-terminus, the 290-residue chain is MSISNYKLQTKVRLQPLVLFQIIAAYERRPKTAKMAVGTLLGRRDRCNDIIEITNSYTVQHKEQQIGEMEQFKLDTQYASEMFELNQITYPQEKIIGWYSTGKSLSRSAAALHAYYSRECGDVQPLHLLVDTTLRGGHLSTRLYCGVTMGVPGGTRGLLFTLLPLLKLNTDGDESVALRLMQKQALHPTKQLGRMLPELVHVMEATRELEQKLELVMRYINDVLARKRRPDNSIGRALHDALTSVPLLDAESFRLMFNANVRNMLMSITLSTMIKTQMELSEKLSYLPDH.

In terms of domain architecture, MPN spans 12–150 (VRLQPLVLFQ…TRLYCGVTMG (139 aa)).

Belongs to the eIF-3 subunit F family. Component of the eukaryotic translation initiation factor 3 (eIF-3) complex. The eIF-3 complex interacts with pix.

It localises to the cytoplasm. In terms of biological role, component of the eukaryotic translation initiation factor 3 (eIF-3) complex, which is involved in protein synthesis of a specialized repertoire of mRNAs and, together with other initiation factors, stimulates binding of mRNA and methionyl-tRNAi to the 40S ribosome. The eIF-3 complex specifically targets and initiates translation of a subset of mRNAs involved in cell proliferation. This is Eukaryotic translation initiation factor 3 subunit F-2 from Drosophila virilis (Fruit fly).